The chain runs to 301 residues: Hepatitis A virus cellular receptor 2 (301 aa).

A signal peptide spans 1–21 (MFSHLPFDCVLLLLLLLLTRS). In terms of domain architecture, Ig-like V-type spans 22–124 (SEVEYRAEVG…PGIMNDEKFN (103 aa)). The Extracellular portion of the chain corresponds to 22–202 (SEVEYRAEVG…RDSGATIRIG (181 aa)). Disulfide bonds link cysteine 38–cysteine 110, cysteine 52–cysteine 63, and cysteine 58–cysteine 109. Arginine 111 serves as a coordination point for a 1,2-diacyl-sn-glycero-3-phospho-L-serine. A Ca(2+)-binding site is contributed by glycine 116. Position 118 (methionine 118) interacts with a 1,2-diacyl-sn-glycero-3-phospho-L-serine. Asparagine 119 is a binding site for Ca(2+). The O-linked (GalNAc...) threonine glycan is linked to threonine 145. N-linked (GlcNAc...) asparagine glycosylation is present at asparagine 172. The helical transmembrane segment at 203–223 (IYIGAGICAGLALALIFGALI) threads the bilayer. Topologically, residues 224–301 (FKWYSHSKEK…QPLGCRFAMP (78 aa)) are cytoplasmic. Tyrosine 265 is subject to Phosphotyrosine; by ITK. A lipid anchor (S-palmitoyl cysteine) is attached at cysteine 296.

This sequence belongs to the immunoglobulin superfamily. TIM family. In terms of assembly, interacts with HMGB1; impairs HMGB1 binding to B-DNA and likely HMGB1-mediated innate immune response. Interacts with BAG6. Interacts (phosphorylated) with PIK3R1 and PIK3R2. Interacts (not dependent on its phosphorylation status) with FYN. Interacts (in basal state T-cells) with VAV1; AKT1/2, LCP2, ZAP70, SYK, PIK3R1, FYN, SH3BP2 and SH2D2A. Interacts (in activated T-cells) with LCK and PLCG. Interacts with ILF3; this interaction promotes ILF3 ubiquitination and degradation. Post-translationally, O-glycosylated with core 1 or possibly core 8 glycans. In terms of processing, phosphorylated on tyrosine residues; modestly increased after TCR/CD28 stimulation. Can be phosphorylated in the cytoplasmic domain by FYN. Phosphorylation at Tyr-265 is increased by stimulation with ligand LGALS9. Palmitoylated by ZDHHC9 at Cys-296; palmitoylation stabilizes HAVCR2 by preventing binding to E3 ubiquitin ligase SYVN1, thereby suppressing its polyubiquitination and degradation. Post-translationally, ubiquitinated by SYVN1, leading to polyubiquitination and proteasomal degradation. As to expression, expressed in T-helper type 1 (Th1) lymphocytes. Expressed on regulatory T (Treg) cells after TCR stimulation. Expressed in dendritic cells and natural killer (NK) cells. Expressed in epithelial tissues. Expression is increased on CD4+ and CD8+ T-cells in chronic hepatitis C virus (HCV) infection. In progressive HIV-1 infection, expression is up-regulated on HIV-1-specific CD8 T-cells.

It is found in the cell membrane. The protein resides in the cell junction. Cell surface receptor implicated in modulating innate and adaptive immune responses. Generally accepted to have an inhibiting function. Reports on stimulating functions suggest that the activity may be influenced by the cellular context and/or the respective ligand. Regulates macrophage activation. Inhibits T-helper type 1 lymphocyte (Th1)-mediated auto- and alloimmune responses and promotes immunological tolerance. In CD8+ cells attenuates TCR-induced signaling, specifically by blocking NF-kappaB and NFAT promoter activities resulting in the loss of IL-2 secretion. The function may implicate its association with LCK proposed to impair phosphorylation of TCR subunits, and/or LGALS9-dependent recruitment of PTPRC to the immunological synapse. In contrast, shown to activate TCR-induced signaling in T-cells probably implicating ZAP70, LCP2, LCK and FYN. Expressed on Treg cells can inhibit Th17 cell responses. Receptor for LGALS9. Binding to LGALS9 is believed to result in suppression of T-cell responses; the resulting apoptosis of antigen-specific cells may implicate HAVCR2 phosphorylation and disruption of its association with BAG6. Binding to LGALS9 is proposed to be involved in innate immune response to intracellular pathogens. Expressed on Th1 cells interacts with LGALS9 expressed on Mycobacterium tuberculosis-infected macrophages to stimulate antibactericidal activity including IL-1 beta secretion and to restrict intracellular bacterial growth. However, the function as receptor for LGALS9 has been challenged. Also reported to enhance CD8+ T-cell responses to an acute infection such as by Listeria monocytogenes. Receptor for phosphatidylserine (PtSer); PtSer-binding is calcium-dependent. May recognize PtSer on apoptotic cells leading to their phagocytosis. Mediates the engulfment of apoptotic cells by dendritic cells. Expressed on T-cells, promotes conjugation but not engulfment of apoptotic cells. Expressed on dendritic cells (DCs) positively regulates innate immune response and in synergy with Toll-like receptors promotes secretion of TNF-alpha. In tumor-imfiltrating DCs suppresses nucleic acid-mediated innate immune repsonse by interaction with HMGB1 and interfering with nucleic acid-sensing and trafficking of nucleid acids to endosomes. Expressed on natural killer (NK) cells acts as a coreceptor to enhance IFN-gamma production in response to LGALS9. In contrast, shown to suppress NK cell-mediated cytotoxicity. Negatively regulates NK cell function in LPS-induced endotoxic shock. The protein is Hepatitis A virus cellular receptor 2 (HAVCR2) of Homo sapiens (Human).